Consider the following 158-residue polypeptide: MGIEGLLEKGFVTTTIDTVVNWGRTGSLWPMTFGLACCAVEMMHAGAARYDLDRFGIVFRPSPRQSDVMIVAGTLVNKMAPALRKVYDQMPEPRWVVSMGSCANGGGYYHYSYSIVRGCDRIVPVDIYVPGCPPTAEALLFGLVQLQKKIRRTNTIAR.

Positions 37, 38, 102, and 132 each coordinate [4Fe-4S] cluster.

Belongs to the complex I 20 kDa subunit family. As to quaternary structure, NDH-1 is composed of 14 different subunits. Subunits NuoB, C, D, E, F, and G constitute the peripheral sector of the complex. The cofactor is [4Fe-4S] cluster.

The protein resides in the cell inner membrane. The enzyme catalyses a quinone + NADH + 5 H(+)(in) = a quinol + NAD(+) + 4 H(+)(out). NDH-1 shuttles electrons from NADH, via FMN and iron-sulfur (Fe-S) centers, to quinones in the respiratory chain. Couples the redox reaction to proton translocation (for every two electrons transferred, four hydrogen ions are translocated across the cytoplasmic membrane), and thus conserves the redox energy in a proton gradient. The protein is NADH-quinone oxidoreductase subunit B 2 of Acidithiobacillus ferrooxidans (strain ATCC 53993 / BNL-5-31) (Leptospirillum ferrooxidans (ATCC 53993)).